The chain runs to 455 residues: Epoxide hydrolase 1 (455 aa).

The helical; Signal-anchor for type III membrane protein transmembrane segment at 1–21 threads the bilayer; that stretch reads MWLEILLTSVLGFAIYWFISR. Over 22–455 the chain is Cytoplasmic; the sequence is DKEETLPLED…RKFLSVLERQ (434 aa). Aspartate 226 serves as the catalytic Nucleophile. Dimethylated arginine is present on arginine 295. Tyrosine 374 functions as the Proton donor in the catalytic mechanism. Catalysis depends on histidine 431, which acts as the Proton acceptor.

This sequence belongs to the peptidase S33 family. In terms of tissue distribution, found in liver.

It is found in the microsome membrane. Its subcellular location is the endoplasmic reticulum membrane. The catalysed reaction is cis-stilbene oxide + H2O = (1R,2R)-hydrobenzoin. The enzyme catalyses 1-(4-methoxyphenyl)-N-methyl-N-[(3-methyloxetan-3-yl)methyl]methanamine + H2O = 2-{[(4-methoxybenzyl)(methyl)amino]methyl}-2-methylpropane-1,3-diol. It carries out the reaction 8,9-epoxy-(5Z,11Z,14Z)-eicosatrienoate + H2O = 8,9-dihydroxy-(5Z,11Z,14Z)-eicosatrienoate. It catalyses the reaction 11,12-epoxy-(5Z,8Z,14Z)-eicosatrienoate + H2O = 11,12-dihydroxy-(5Z,8Z,14Z)-eicosatrienoate. The catalysed reaction is 2-(5Z,8Z,11Z,14Z-eicosatetraenoyl)-glycerol + H2O = glycerol + (5Z,8Z,11Z,14Z)-eicosatetraenoate + H(+). Its activity is regulated as follows. Inhibited by 10-hydroxystearamide and methoxy-arachidonyl fluorophosphate. Biotransformation enzyme that catalyzes the hydrolysis of arene and aliphatic epoxides to less reactive and more water soluble dihydrodiols by the trans addition of water. Plays a role in the metabolism of endogenous lipids such as epoxide-containing fatty acids. Metabolizes the abundant endocannabinoid 2-arachidonoylglycerol (2-AG) to free arachidonic acid (AA) and glycerol. Binds 20(S)-hydroxycholesterol (20(S)-OHC). The polypeptide is Epoxide hydrolase 1 (Homo sapiens (Human)).